A 330-amino-acid chain; its full sequence is Putative [LysW]-L-2-aminoadipate/[LysW]-L-glutamate phosphate reductase (330 aa).

NADP(+)-binding positions include 10–13 and 34–36; these read SGYI and SRK. Residue cysteine 142 is part of the active site. Asparagine 297 is an NADP(+) binding site.

It belongs to the NAGSA dehydrogenase family. Type 1 subfamily. LysY sub-subfamily.

It localises to the cytoplasm. The catalysed reaction is [amino-group carrier protein]-C-terminal-N-(1-carboxy-5-oxopentan-1-yl)-L-glutamine + phosphate + NADP(+) = [amino-group carrier protein]-C-terminal-N-(1-carboxy-5-phosphooxy-5-oxopentan-1-yl)-L-glutamine + NADPH + H(+). It catalyses the reaction [amino-group carrier protein]-C-terminal-gamma-(L-glutamyl-5-semialdehyde)-L-glutamate + phosphate + NADP(+) = [amino-group carrier protein]-C-terminal-gamma-(5-phospho-L-glutamyl)-L-glutamate + NADPH + H(+). Its pathway is amino-acid biosynthesis; L-lysine biosynthesis via AAA pathway; L-lysine from L-alpha-aminoadipate (Thermus route): step 3/5. The protein operates within amino-acid biosynthesis; L-arginine biosynthesis. Its function is as follows. Involved in both the arginine and lysine biosynthetic pathways. This is Putative [LysW]-L-2-aminoadipate/[LysW]-L-glutamate phosphate reductase from Pyrococcus abyssi (strain GE5 / Orsay).